A 374-amino-acid polypeptide reads, in one-letter code: Chaperone protein DnaJ (374 aa).

The J domain occupies aspartate 5–glycine 69. Residues glycine 141–arginine 223 form a CR-type zinc finger. Positions 154, 157, 171, 174, 197, 200, 211, and 214 each coordinate Zn(2+). 4 CXXCXGXG motif repeats span residues cysteine 154–glycine 161, cysteine 171–glycine 178, cysteine 197–glycine 204, and cysteine 211–glycine 218.

The protein belongs to the DnaJ family. As to quaternary structure, homodimer. Zn(2+) is required as a cofactor.

The protein resides in the cytoplasm. Functionally, participates actively in the response to hyperosmotic and heat shock by preventing the aggregation of stress-denatured proteins and by disaggregating proteins, also in an autonomous, DnaK-independent fashion. Unfolded proteins bind initially to DnaJ; upon interaction with the DnaJ-bound protein, DnaK hydrolyzes its bound ATP, resulting in the formation of a stable complex. GrpE releases ADP from DnaK; ATP binding to DnaK triggers the release of the substrate protein, thus completing the reaction cycle. Several rounds of ATP-dependent interactions between DnaJ, DnaK and GrpE are required for fully efficient folding. Also involved, together with DnaK and GrpE, in the DNA replication of plasmids through activation of initiation proteins. The protein is Chaperone protein DnaJ of Mesoplasma florum (strain ATCC 33453 / NBRC 100688 / NCTC 11704 / L1) (Acholeplasma florum).